We begin with the raw amino-acid sequence, 311 residues long: E3 ubiquitin-protein ligase RNF126 (311 aa).

Zn(2+) contacts are provided by cysteine 13, cysteine 16, cysteine 29, and cysteine 32. A C4-type zinc finger spans residues 13 to 32 (CHSCTAEIIPRLPEYTCPRC). 2 disordered regions span residues 42–62 (ETRN…NRPS) and 95–133 (GTSG…RRAA). Over residues 101–114 (EEPRDGESRREHQS) the composition is skewed to basic and acidic residues. The segment covering 123-133 (PRARLSTRRAA) has biased composition (basic residues). An RING-type zinc finger spans residues 227–268 (CPVCKEDYTVGESVRQLPCNHLFHNDCIIPWLEQHDTCPVCR). Positions 274–311 (QNTATNPPGLTEMTFSSSSTSSSSSTSPTDENNAANNS) are disordered. Residues 289–300 (SSSSTSSSSSTS) show a composition bias toward low complexity. Polar residues predominate over residues 301 to 311 (PTDENNAANNS).

It is found in the cytoplasm. The protein localises to the nucleus. The enzyme catalyses S-ubiquitinyl-[E2 ubiquitin-conjugating enzyme]-L-cysteine + [acceptor protein]-L-lysine = [E2 ubiquitin-conjugating enzyme]-L-cysteine + N(6)-ubiquitinyl-[acceptor protein]-L-lysine.. It functions in the pathway protein modification; protein ubiquitination. E3 ubiquitin-protein ligase that mediates ubiquitination oF target proteins. Depending on the associated E2 ligase, mediates 'Lys-27'-, 'Lys-29'-, 'Lys-48'- and/or 'Lys-63'-linked polyubiquitination of substrates. Part of a BAG6-dependent quality control process ensuring that proteins of the secretory pathway that are mislocalized to the cytosol are degraded by the proteasome. Probably acts by providing the ubiquitin ligase activity associated with the BAG6 complex and be responsible for ubiquitination of the hydrophobic mislocalized proteins and their targeting to the proteasome. In Xenopus tropicalis (Western clawed frog), this protein is E3 ubiquitin-protein ligase RNF126.